The primary structure comprises 508 residues: Photosystem II CP47 reaction center protein (508 aa).

6 helical membrane passes run 21 to 36 (SVHIMHTALVSGWAGS), 101 to 115 (IVFSGLCFLAAIWHW), 140 to 156 (GIHLFLSGVACFGFGAF), 203 to 218 (IAAGTLGILAGLFHLS), 237 to 252 (VLSSSIAAVFFAAFVV), and 457 to 472 (SFALLFFFGHIWHGSR).

This sequence belongs to the PsbB/PsbC family. PsbB subfamily. In terms of assembly, PSII is composed of 1 copy each of membrane proteins PsbA, PsbB, PsbC, PsbD, PsbE, PsbF, PsbH, PsbI, PsbJ, PsbK, PsbL, PsbM, PsbT, PsbX, PsbY, PsbZ, Psb30/Ycf12, at least 3 peripheral proteins of the oxygen-evolving complex and a large number of cofactors. It forms dimeric complexes. It depends on Binds multiple chlorophylls. PSII binds additional chlorophylls, carotenoids and specific lipids. as a cofactor.

It is found in the plastid. The protein resides in the chloroplast thylakoid membrane. In terms of biological role, one of the components of the core complex of photosystem II (PSII). It binds chlorophyll and helps catalyze the primary light-induced photochemical processes of PSII. PSII is a light-driven water:plastoquinone oxidoreductase, using light energy to abstract electrons from H(2)O, generating O(2) and a proton gradient subsequently used for ATP formation. The polypeptide is Photosystem II CP47 reaction center protein (Lobularia maritima (Sweet alyssum)).